Reading from the N-terminus, the 463-residue chain is Steroidogenic factor 1 (463 aa).

A DNA-binding region (nuclear receptor) is located at residues 10-85 (DELCPVCGDK…VGMRLEAVRA (76 aa)). The NR C4-type zinc-finger motif lies at 13 to 33 (CPVCGDKVSGYHYGLLTCESC). N6-acetyllysine is present on residues Lys34, Lys38, and Lys72. The NR C4-type zinc finger occupies 49 to 73 (CTESQNCKIDKTQRKRCPYCRFQKC). Residue Lys119 forms a Glycyl lysine isopeptide (Lys-Gly) (interchain with G-Cter in SUMO) linkage. A disordered region spans residues 119 to 160 (KLETGPSMGPPPQTDYPLAPALHPGAKGLAPAPPAGPPGDYE). Low complexity predominate over residues 135-148 (PLAPALHPGAKGLA). Lys193 participates in a covalent cross-link: Glycyl lysine isopeptide (Lys-Gly) (interchain with G-Cter in SUMO). The tract at residues 197-216 (PEPYASPHEPAPPYGYPEPY) is disordered. Ser202 bears the Phosphoserine; by CDK7 mark. Over residues 205–216 (EPAPPYGYPEPY) the composition is skewed to pro residues. Residues 224-461 (GVPELILKLL…NLLIEMLHAK (238 aa)) form the NR LBD domain. The a 1,2-diacyl-sn-glycero-3-phosphocholine site is built by Gly343, Tyr438, and Lys442.

This sequence belongs to the nuclear hormone receptor family. NR5 subfamily. In terms of assembly, binds DNA as a monomer. Part of a complex consisting of SFPQ, NONO and NR5A1. Interacts with NR0B2, NCOA2 and PPARGC1A. Interacts with DGKQ and CDK7. Binds to and activated by HIPK3. Post-translationally, acetylation stimulates the transcriptional activity. In terms of processing, sumoylation reduces CDK7-mediated phosphorylation on Ser-202. Phosphorylated on Ser-202 by CDK7. This phosphorylation promotes transcriptional activity. Expressed in the pre-granulosa and Sertoli cells of the ovary and testis, respectively. In the testis it is also present in the interstitial cells. In the adult ovary it is expressed in the interstitial gland, and in the granulosa cells and theca interna of small to medium-sized antral follicles, but is not expressed in large antral follicles.

It is found in the nucleus. Its function is as follows. Transcriptional activator. Seems to be essential for sexual differentiation and formation of the primary steroidogenic tissues. Binds to the Ad4 site found in the promoter region of steroidogenic P450 genes such as CYP11A, CYP11B and CYP21B. Also regulates the AMH/Muellerian inhibiting substance gene as well as the AHCH and STAR genes. 5'-YCAAGGYC-3' and 5'-RRAGGTCA-3' are the consensus sequences for the recognition by NR5A1. The SFPQ-NONO-NR5A1 complex binds to the CYP17 promoter and regulates basal and cAMP-dependent transcriptional activity. Binds phosphatidylcholine and phospholipids with a phosphatidylinositol (PI) headgroup, in particular PI(3,4)P2 and PI(3,4,5)P3. Activated by the phosphorylation of NR5A1 by HIPK3 leading to increased steroidogenic gene expression upon cAMP signaling pathway stimulation. The chain is Steroidogenic factor 1 (NR5A1) from Notamacropus eugenii (Tammar wallaby).